We begin with the raw amino-acid sequence, 1400 residues long: RNA polymerase II-associated protein 1 (1400 aa).

4 disordered regions span residues 35–54 (KGSR…QDHR), 60–95 (DSLP…EERL), 161–215 (VSDN…GKGL), and 269–310 (REQT…DKLE). Basic and acidic residues-rich tracts occupy residues 39–54 (RRGD…QDHR) and 85–95 (LPHDEDPEERL). Basic and acidic residues predominate over residues 269–282 (REQTETKATKEQNP). A Phosphothreonine modification is found at Thr-329. The segment at 504–539 (PSHDDKEDEDEDEELTKEKVNRKTPEEGSRPPPDLA) is disordered. Positions 509 to 518 (KEDEDEDEEL) are enriched in acidic residues. Over residues 519 to 539 (TKEKVNRKTPEEGSRPPPDLA) the composition is skewed to basic and acidic residues.

This sequence belongs to the RPAP1 family. In terms of assembly, part of an RNA polymerase II complex that contains POLR2A, POLR2B, POLR2C, POLR2D, POLR2E, POLR2F, POLR2G, POLR2H, POLR2I, POLR2J, POLR2K, POLR2L, RPAP1, FCP1 plus the general transcription factors TFIIB and TFIIF.

It is found in the nucleus. In terms of biological role, forms an interface between the RNA polymerase II enzyme and chaperone/scaffolding protein, suggesting that it is required to connect RNA polymerase II to regulators of protein complex formation. Required for interaction of the RNA polymerase II complex with acetylated histone H3. This chain is RNA polymerase II-associated protein 1 (Rpap1), found in Rattus norvegicus (Rat).